A 105-amino-acid chain; its full sequence is uncharacterized protein (105 aa).

At Ser2 the chain carries N-acetylserine.

This is an uncharacterized protein from Saccharomyces cerevisiae (strain ATCC 204508 / S288c) (Baker's yeast).